The sequence spans 600 residues: Elongation factor 4 (600 aa).

Positions 7–189 (SLIRNFSIIA…ALVQRLPAPT (183 aa)) constitute a tr-type G domain. GTP-binding positions include 19-24 (DHGKST) and 136-139 (NKID).

It belongs to the TRAFAC class translation factor GTPase superfamily. Classic translation factor GTPase family. LepA subfamily.

The protein resides in the cell inner membrane. It carries out the reaction GTP + H2O = GDP + phosphate + H(+). In terms of biological role, required for accurate and efficient protein synthesis under certain stress conditions. May act as a fidelity factor of the translation reaction, by catalyzing a one-codon backward translocation of tRNAs on improperly translocated ribosomes. Back-translocation proceeds from a post-translocation (POST) complex to a pre-translocation (PRE) complex, thus giving elongation factor G a second chance to translocate the tRNAs correctly. Binds to ribosomes in a GTP-dependent manner. The polypeptide is Elongation factor 4 (Gluconobacter oxydans (strain 621H) (Gluconobacter suboxydans)).